Consider the following 89-residue polypeptide: Small ribosomal subunit protein uS15 (89 aa).

The protein belongs to the universal ribosomal protein uS15 family. In terms of assembly, part of the 30S ribosomal subunit. Forms a bridge to the 50S subunit in the 70S ribosome, contacting the 23S rRNA.

One of the primary rRNA binding proteins, it binds directly to 16S rRNA where it helps nucleate assembly of the platform of the 30S subunit by binding and bridging several RNA helices of the 16S rRNA. In terms of biological role, forms an intersubunit bridge (bridge B4) with the 23S rRNA of the 50S subunit in the ribosome. In Acaryochloris marina (strain MBIC 11017), this protein is Small ribosomal subunit protein uS15.